An 89-amino-acid polypeptide reads, in one-letter code: Acylphosphatase (89 aa).

The region spanning 3–89 is the Acylphosphatase-like domain; that stretch reads RKEFLVSGRV…DTREKRFSTY (87 aa). Catalysis depends on residues R18 and N36.

Belongs to the acylphosphatase family.

It catalyses the reaction an acyl phosphate + H2O = a carboxylate + phosphate + H(+). This Clostridium perfringens (strain ATCC 13124 / DSM 756 / JCM 1290 / NCIMB 6125 / NCTC 8237 / Type A) protein is Acylphosphatase (acyP).